Here is a 1764-residue protein sequence, read N- to C-terminus: Nucleolar pre-ribosomal-associated protein 1 (1764 aa).

The interval 1-23 (MSNHSEAYGSRDQRREKYTQGKE) is disordered. Residues 9–23 (GSRDQRREKYTQGKE) are compositionally biased toward basic and acidic residues.

Associates with pre-60S ribosomal particles. Predominantly associated with the 27SA2 pre-rRNA. Can associate with a subset of box H/ACA and box C/D small nucleolar RNPs (snoRNPs) required for peptidyl transferase center modification and with small RNAs snR37 and snR42. Interacts with URB2. Together with DBP6, NOP8, URB2 and RSA3, forms an RNA-independent complex, which is required during early maturation of nascent 60S ribosomal subunits.

Its subcellular location is the nucleus. It localises to the nucleolus. Functionally, required for 60S ribosomal subunit formation and pre-rRNA processing. Required for normal accumulation of 25S and 5.8S rRNAs. This Saccharomyces cerevisiae (strain ATCC 204508 / S288c) (Baker's yeast) protein is Nucleolar pre-ribosomal-associated protein 1 (URB1).